The following is a 203-amino-acid chain: Enterotoxin-like toxin X (203 aa).

It belongs to the staphylococcal/streptococcal toxin family.

It localises to the secreted. Plays a role in the inhibition of the host innate immune system. Inhibits phagocytosis and killing by human neutrophils by interacting with multiple neutrophil surface glycoproteins in a sialic acid-dependent manner. The sequence is that of Enterotoxin-like toxin X from Staphylococcus aureus (strain NCTC 8325 / PS 47).